A 1370-amino-acid polypeptide reads, in one-letter code: DNA-directed RNA polymerase subunit beta (1370 aa).

The protein belongs to the RNA polymerase beta chain family. As to quaternary structure, the RNAP catalytic core consists of 2 alpha, 1 beta, 1 beta' and 1 omega subunit. When a sigma factor is associated with the core the holoenzyme is formed, which can initiate transcription.

The enzyme catalyses RNA(n) + a ribonucleoside 5'-triphosphate = RNA(n+1) + diphosphate. In terms of biological role, DNA-dependent RNA polymerase catalyzes the transcription of DNA into RNA using the four ribonucleoside triphosphates as substrates. This chain is DNA-directed RNA polymerase subunit beta, found in Delftia acidovorans (strain DSM 14801 / SPH-1).